A 311-amino-acid chain; its full sequence is Small ribosomal subunit biogenesis GTPase RsgA (311 aa).

The CP-type G domain maps to 88-246 (SKEKEQVIVA…VIDTPGIREF (159 aa)). GTP is bound by residues 137–140 (NKID) and 188–196 (GHSGVGKST). Positions 270, 275, 277, and 283 each coordinate Zn(2+).

It belongs to the TRAFAC class YlqF/YawG GTPase family. RsgA subfamily. As to quaternary structure, monomer. Associates with 30S ribosomal subunit, binds 16S rRNA. It depends on Zn(2+) as a cofactor.

Its subcellular location is the cytoplasm. Functionally, one of several proteins that assist in the late maturation steps of the functional core of the 30S ribosomal subunit. Helps release RbfA from mature subunits. May play a role in the assembly of ribosomal proteins into the subunit. Circularly permuted GTPase that catalyzes slow GTP hydrolysis, GTPase activity is stimulated by the 30S ribosomal subunit. In Chlorobaculum tepidum (strain ATCC 49652 / DSM 12025 / NBRC 103806 / TLS) (Chlorobium tepidum), this protein is Small ribosomal subunit biogenesis GTPase RsgA.